We begin with the raw amino-acid sequence, 294 residues long: GTP cyclohydrolase FolE2 (294 aa).

Belongs to the GTP cyclohydrolase IV family.

It catalyses the reaction GTP + H2O = 7,8-dihydroneopterin 3'-triphosphate + formate + H(+). It participates in cofactor biosynthesis; 7,8-dihydroneopterin triphosphate biosynthesis; 7,8-dihydroneopterin triphosphate from GTP: step 1/1. Its function is as follows. Converts GTP to 7,8-dihydroneopterin triphosphate. The chain is GTP cyclohydrolase FolE2 from Acinetobacter baylyi (strain ATCC 33305 / BD413 / ADP1).